The sequence spans 385 residues: 8-amino-7-oxononanoate synthase (385 aa).

R21 contacts substrate. 108–109 (GF) contributes to the pyridoxal 5'-phosphate binding site. Position 133 (H133) interacts with substrate. Residues S179, H207, and T233 each coordinate pyridoxal 5'-phosphate. K236 carries the N6-(pyridoxal phosphate)lysine modification. Substrate is bound at residue T352.

Belongs to the class-II pyridoxal-phosphate-dependent aminotransferase family. BioF subfamily. As to quaternary structure, homodimer. Pyridoxal 5'-phosphate serves as cofactor.

It carries out the reaction 6-carboxyhexanoyl-[ACP] + L-alanine + H(+) = (8S)-8-amino-7-oxononanoate + holo-[ACP] + CO2. It participates in cofactor biosynthesis; biotin biosynthesis. In terms of biological role, catalyzes the decarboxylative condensation of pimeloyl-[acyl-carrier protein] and L-alanine to produce 8-amino-7-oxononanoate (AON), [acyl-carrier protein], and carbon dioxide. The polypeptide is 8-amino-7-oxononanoate synthase (Klebsiella pneumoniae (strain 342)).